Consider the following 92-residue polypeptide: Pyrimidine/purine nucleoside phosphorylase (92 aa).

It belongs to the nucleoside phosphorylase PpnP family.

The catalysed reaction is a purine D-ribonucleoside + phosphate = a purine nucleobase + alpha-D-ribose 1-phosphate. It catalyses the reaction adenosine + phosphate = alpha-D-ribose 1-phosphate + adenine. It carries out the reaction cytidine + phosphate = cytosine + alpha-D-ribose 1-phosphate. The enzyme catalyses guanosine + phosphate = alpha-D-ribose 1-phosphate + guanine. The catalysed reaction is inosine + phosphate = alpha-D-ribose 1-phosphate + hypoxanthine. It catalyses the reaction thymidine + phosphate = 2-deoxy-alpha-D-ribose 1-phosphate + thymine. It carries out the reaction uridine + phosphate = alpha-D-ribose 1-phosphate + uracil. The enzyme catalyses xanthosine + phosphate = alpha-D-ribose 1-phosphate + xanthine. Its function is as follows. Catalyzes the phosphorolysis of diverse nucleosides, yielding D-ribose 1-phosphate and the respective free bases. Can use uridine, adenosine, guanosine, cytidine, thymidine, inosine and xanthosine as substrates. Also catalyzes the reverse reactions. In Rhodopirellula baltica (strain DSM 10527 / NCIMB 13988 / SH1), this protein is Pyrimidine/purine nucleoside phosphorylase.